The following is a 195-amino-acid chain: Rho-related protein racB (195 aa).

10–17 is a binding site for GTP; the sequence is GDGAVGKT. The Effector region signature appears at 32–40; it reads YVPTVFDNY. GTP-binding positions include 57-61 and 115-118; these read DTAGQ and TKCD. Cysteine 192 carries the cysteine methyl ester modification. Cysteine 192 is lipidated: S-geranylgeranyl cysteine. Residues 193–195 constitute a propeptide, removed in mature form; the sequence is SIL.

The protein belongs to the small GTPase superfamily. Rho family. Interacts with pakB.

It is found in the cell membrane. The sequence is that of Rho-related protein racB (racB) from Dictyostelium discoideum (Social amoeba).